We begin with the raw amino-acid sequence, 277 residues long: Putative hydroxypyruvate isomerase (277 aa).

Residues glutamate 150 and glutamate 249 each act as proton donor/acceptor in the active site.

It belongs to the hyi family.

It catalyses the reaction 3-hydroxypyruvate = 2-hydroxy-3-oxopropanoate. In terms of biological role, catalyzes the reversible isomerization between hydroxypyruvate and 2-hydroxy-3-oxopropanoate (also termed tartronate semialdehyde). The polypeptide is Putative hydroxypyruvate isomerase (Hyi) (Mus musculus (Mouse)).